Reading from the N-terminus, the 160-residue chain is Transcription antitermination protein NusB (160 aa).

It belongs to the NusB family.

Its function is as follows. Involved in transcription antitermination. Required for transcription of ribosomal RNA (rRNA) genes. Binds specifically to the boxA antiterminator sequence of the ribosomal RNA (rrn) operons. In Rhizobium etli (strain CIAT 652), this protein is Transcription antitermination protein NusB.